The following is a 333-amino-acid chain: Glycerol-3-phosphate dehydrogenase [NAD(P)+] (333 aa).

Positions 15 and 108 each coordinate NADPH. Residues Lys108, Gly136, and Ser138 each coordinate sn-glycerol 3-phosphate. Ala140 serves as a coordination point for NADPH. 5 residues coordinate sn-glycerol 3-phosphate: Lys191, Asp244, Ser254, Arg255, and Asn256. Catalysis depends on Lys191, which acts as the Proton acceptor. Position 255 (Arg255) interacts with NADPH. NADPH-binding residues include Val279 and Glu281.

It belongs to the NAD-dependent glycerol-3-phosphate dehydrogenase family.

It localises to the cytoplasm. The catalysed reaction is sn-glycerol 3-phosphate + NAD(+) = dihydroxyacetone phosphate + NADH + H(+). The enzyme catalyses sn-glycerol 3-phosphate + NADP(+) = dihydroxyacetone phosphate + NADPH + H(+). It functions in the pathway membrane lipid metabolism; glycerophospholipid metabolism. Its function is as follows. Catalyzes the reduction of the glycolytic intermediate dihydroxyacetone phosphate (DHAP) to sn-glycerol 3-phosphate (G3P), the key precursor for phospholipid synthesis. This Maricaulis maris (strain MCS10) (Caulobacter maris) protein is Glycerol-3-phosphate dehydrogenase [NAD(P)+].